We begin with the raw amino-acid sequence, 61 residues long: Small ribosomal subunit protein uS14 (61 aa).

Cysteine 24, cysteine 27, cysteine 40, and cysteine 43 together coordinate Zn(2+).

Belongs to the universal ribosomal protein uS14 family. Zinc-binding uS14 subfamily. Part of the 30S ribosomal subunit. Contacts proteins S3 and S10. Requires Zn(2+) as cofactor.

In terms of biological role, binds 16S rRNA, required for the assembly of 30S particles and may also be responsible for determining the conformation of the 16S rRNA at the A site. This is Small ribosomal subunit protein uS14 from Thermotoga neapolitana (strain ATCC 49049 / DSM 4359 / NBRC 107923 / NS-E).